The chain runs to 137 residues: Small ribosomal subunit protein uS11 (137 aa).

2 disordered regions span residues Met-1–Lys-32 and Ile-118–Val-137. A compositionally biased stretch (basic residues) spans Lys-12 to Lys-21.

This sequence belongs to the universal ribosomal protein uS11 family. Part of the 30S ribosomal subunit. Interacts with proteins S7 and S18. Binds to IF-3.

Its function is as follows. Located on the platform of the 30S subunit, it bridges several disparate RNA helices of the 16S rRNA. Forms part of the Shine-Dalgarno cleft in the 70S ribosome. The protein is Small ribosomal subunit protein uS11 of Nocardia farcinica (strain IFM 10152).